The primary structure comprises 369 residues: Lipoyl synthase, mitochondrial (369 aa).

The N-terminal 32 residues, 1-32 (MLTKGVRALAWSPRRYITLDAEAAKPVVAKRR), are a transit peptide targeting the mitochondrion. Positions 106, 111, 117, 136, 140, 143, and 351 each coordinate [4Fe-4S] cluster. The region spanning 121 to 340 (NKGSATATIM…KEKALELGFL (220 aa)) is the Radical SAM core domain.

The protein belongs to the radical SAM superfamily. Lipoyl synthase family. The cofactor is [4Fe-4S] cluster.

It is found in the mitochondrion. The enzyme catalyses [[Fe-S] cluster scaffold protein carrying a second [4Fe-4S](2+) cluster] + N(6)-octanoyl-L-lysyl-[protein] + 2 oxidized [2Fe-2S]-[ferredoxin] + 2 S-adenosyl-L-methionine + 4 H(+) = [[Fe-S] cluster scaffold protein] + N(6)-[(R)-dihydrolipoyl]-L-lysyl-[protein] + 4 Fe(3+) + 2 hydrogen sulfide + 2 5'-deoxyadenosine + 2 L-methionine + 2 reduced [2Fe-2S]-[ferredoxin]. It participates in protein modification; protein lipoylation via endogenous pathway; protein N(6)-(lipoyl)lysine from octanoyl-[acyl-carrier-protein]: step 2/2. Catalyzes the radical-mediated insertion of two sulfur atoms into the C-6 and C-8 positions of the octanoyl moiety bound to the lipoyl domains of lipoate-dependent enzymes, thereby converting the octanoylated domains into lipoylated derivatives. This chain is Lipoyl synthase, mitochondrial, found in Eremothecium gossypii (strain ATCC 10895 / CBS 109.51 / FGSC 9923 / NRRL Y-1056) (Yeast).